A 520-amino-acid polypeptide reads, in one-letter code: D-aminopeptidase (520 aa).

Ser62 acts as the Nucleophile in catalysis. The Proton donor/acceptor role is filled by Lys65. The tract at residues 477 to 487 (QRSMDAPSPGE) is important for specificity. Asp481 lines the substrate pocket.

The protein belongs to the peptidase S12 family. Homodimer.

It catalyses the reaction Release of an N-terminal D-amino acid from a peptide, Xaa-|-Yaa-, in which Xaa is preferably D-Ala, D-Ser or D-Thr. D-amino acid amides and methyl esters also are hydrolyzed, as is glycine amide.. With respect to regulation, inhibited by beta-lactam compounds such as 6-aminopenicillic acid, 7-aminocephalosporanic acid, benzylpenicillin and ampicillin. Inhibited by p-chloromercuribenzoate. In terms of biological role, hydrolyzes N-terminal residues in D-amino acid-containing peptides. This Brucella anthropi (strain ATCC 49188 / DSM 6882 / CCUG 24695 / JCM 21032 / LMG 3331 / NBRC 15819 / NCTC 12168 / Alc 37) (Ochrobactrum anthropi) protein is D-aminopeptidase.